A 655-amino-acid polypeptide reads, in one-letter code: Ankyrin repeat and SAM domain-containing protein 3 (655 aa).

The tract at residues 1 to 421 (MSELSDEASE…PGSEPQTEKS (421 aa)) is interaction with NEK7. Residues S2 and S5 each carry the phosphoserine modification. ANK repeat units lie at residues 34-64 (DVPL…DLNK), 68-97 (GGWT…SVNV), 101-130 (EGQT…ELEM), 134-163 (HGWT…NANV), 168-197 (YGYT…KVDT), and 201-220 (SGAT…IVAL). At N96 the chain carries 3-hydroxyasparagine. Phosphoserine is present on residues S201, S225, S243, S244, and S245. Positions 314–426 (YRDVTSPINE…QTEKSPYSGP (113 aa)) are disordered. A Phosphothreonine modification is found at T318. Residues S319, S366, S369, and S373 each carry the phosphoserine modification. Over residues 378 to 395 (KSSVRKQTRSYLKNKSRH) the composition is skewed to basic residues. Positions 424 to 487 (SGPQDLATLL…TSAIARWHSS (64 aa)) constitute an SAM domain. The stretch at 500 to 575 (ADRLETEMQE…AALVLDQLRA (76 aa)) forms a coiled coil. S540 bears the Phosphoserine mark.

In terms of assembly, homooligomer. Interacts (via SAM domain) with ANKS6 (via SAM domain). Interacts with BICC1. Interacts with NPHP1. Interacts with NEK8. Interacts with HIF1AN. Interacts with NEK7; this interaction alters the subcellular distribution of NEK7 by preventing its nuclear translocation. Post-translationally, hydroxylated at Asn-96, most probably by HIF1AN. In terms of processing, phosphorylations at Ser-5, Ser-225, Thr-318, Ser-319, Ser-366 and Ser-369 occur in a NEK7-dependent manner. Polyubiquitinated. In terms of tissue distribution, kidney (at protein level).

The protein localises to the cell projection. Its subcellular location is the cilium. It is found in the cytoplasm. May be involved in vasopressin signaling in the kidney. In Mus musculus (Mouse), this protein is Ankyrin repeat and SAM domain-containing protein 3 (Anks3).